The sequence spans 185 residues: UPF0149 protein XF_2010 (185 aa).

Belongs to the UPF0149 family.

This is UPF0149 protein XF_2010 from Xylella fastidiosa (strain 9a5c).